Here is a 399-residue protein sequence, read N- to C-terminus: L-2-hydroxyglutarate dehydrogenase (399 aa).

The protein belongs to the L2HGDH family. It depends on FAD as a cofactor.

The enzyme catalyses (S)-2-hydroxyglutarate + A = 2-oxoglutarate + AH2. In terms of biological role, catalyzes the dehydrogenation of L-2-hydroxyglutarate (L2HG or(S)-2-hydroxyglutarate) to 2-oxoglutarate (alpha-ketoglutarate). Active in vitro with the artificial electron acceptor 2,6-dichlorophenolindophenol (DCPIP). Also displays a very low oxidase activity in vitro on L-2-hydroxyglutarate with O2 as the electron acceptor, but this activity is most likely not physiological. The protein is L-2-hydroxyglutarate dehydrogenase of Indibacter alkaliphilus (strain CCUG 57479 / KCTC 22604 / LW1).